We begin with the raw amino-acid sequence, 376 residues long: Histidinol-phosphate aminotransferase (376 aa).

The interval 1 to 21 is disordered; it reads MQPRDLSAHEPYVPGRGTKEV. An N6-(pyridoxal phosphate)lysine modification is found at lysine 222.

This sequence belongs to the class-II pyridoxal-phosphate-dependent aminotransferase family. Histidinol-phosphate aminotransferase subfamily. Requires pyridoxal 5'-phosphate as cofactor.

The enzyme catalyses L-histidinol phosphate + 2-oxoglutarate = 3-(imidazol-4-yl)-2-oxopropyl phosphate + L-glutamate. The protein operates within amino-acid biosynthesis; L-histidine biosynthesis; L-histidine from 5-phospho-alpha-D-ribose 1-diphosphate: step 7/9. In Haloquadratum walsbyi (strain DSM 16790 / HBSQ001), this protein is Histidinol-phosphate aminotransferase.